A 133-amino-acid chain; its full sequence is Cytochrome c-554 (133 aa).

A Pyrrolidone carboxylic acid modification is found at Q1. The heme c site is built by M17, C122, C125, and H126.

In terms of processing, binds 1 heme c group covalently per subunit.

Its subcellular location is the periplasm. Functionally, monoheme c-type cytochrome, that is particularly expressed when cells generate energy via aerobic respiration. This Cereibacter sphaeroides (Rhodobacter sphaeroides) protein is Cytochrome c-554 (cycF).